Consider the following 479-residue polypeptide: Glutamyl-tRNA(Gln) amidotransferase subunit A (479 aa).

Active-site charge relay system residues include lysine 75 and serine 150. The Acyl-ester intermediate role is filled by serine 174.

This sequence belongs to the amidase family. GatA subfamily. Heterotrimer of A, B and C subunits.

It catalyses the reaction L-glutamyl-tRNA(Gln) + L-glutamine + ATP + H2O = L-glutaminyl-tRNA(Gln) + L-glutamate + ADP + phosphate + H(+). Allows the formation of correctly charged Gln-tRNA(Gln) through the transamidation of misacylated Glu-tRNA(Gln) in organisms which lack glutaminyl-tRNA synthetase. The reaction takes place in the presence of glutamine and ATP through an activated gamma-phospho-Glu-tRNA(Gln). The sequence is that of Glutamyl-tRNA(Gln) amidotransferase subunit A from Synechococcus elongatus (strain ATCC 33912 / PCC 7942 / FACHB-805) (Anacystis nidulans R2).